The primary structure comprises 157 residues: UPF0587 protein C2D10.03c (157 aa).

Positions 34, 37, 68, and 71 each coordinate Zn(2+).

It belongs to the UPF0587 family.

This is UPF0587 protein C2D10.03c from Schizosaccharomyces pombe (strain 972 / ATCC 24843) (Fission yeast).